The chain runs to 1491 residues: Copper-transporting ATPase 1 (1491 aa).

Residues 1-644 (MEPSVDANSI…KREIKQWRGS (644 aa)) lie on the Cytoplasmic side of the membrane. HMA domains lie at 8–74 (NSIT…FDAL) and 85–151 (TNTV…LDMG). Cu(+)-binding residues include T18, C19, and C22. Residue T152 is modified to Phosphothreonine. The HMA 3 domain occupies 171 to 237 (VMLKMKVEGM…QIEAVGFPAF (67 aa)). C182 and C185 together coordinate Cu(+). S270 carries the phosphoserine modification. In terms of domain architecture, HMA 4 spans 277-343 (STTMFTIEGM…AIEAISPGQY (67 aa)). Positions 288 and 291 each coordinate Cu(+). Residue T327 is modified to Phosphothreonine. A phosphoserine mark is found at S339, S353, S357, and S362. HMA domains follow at residues 377–443 (QEAV…FDAA), 479–545 (NKCY…FGAM), and 555–621 (GILE…FEAS). Cu(+)-binding residues include C388, C391, C490, C493, C566, and C569. Residues 645–666 (FLVSLFFCIPVMGLMVYMMVMD) traverse the membrane as a helical segment. Residues 667–705 (HHLATLHHNQNMSNEEMINMHSAMFLERQILPGLSIMNL) lie on the Extracellular side of the membrane. Residue N677 is glycosylated (N-linked (GlcNAc...) asparagine). A helical transmembrane segment spans residues 706 to 725 (LSLLLCLPVQFCGGWYFYIQ). Residues 726–732 (AYKALKH) are Cytoplasmic-facing. The chain crosses the membrane as a helical span at residues 733–753 (KTANMDVLIVLATTIAFAYSL). At 754-772 (VILLVAMFERAKVNPITFF) the chain is on the extracellular side. The helical transmembrane segment at 773–793 (DTPPMLFVFIALGRWLEHIAK) threads the bilayer. The Cytoplasmic portion of the chain corresponds to 794 to 926 (GKTSEALAKL…SKAPIQQFAD (133 aa)). A helical transmembrane segment spans residues 927-950 (KLSGYFVPFIVLVSIVTLLVWIII). Residues 951–980 (GFQNFEIVETYFPGYNRSISRTETIIRFAF) lie on the Extracellular side of the membrane. N-linked (GlcNAc...) asparagine glycosylation is present at N966. The helical transmembrane segment at 981–1002 (QASITVLCIACPCSLGLATPTA) threads the bilayer. Over 1003-1347 (VMVGTGVGAQ…LSRKTVKRIR (345 aa)) the chain is Cytoplasmic. The 4-aspartylphosphate intermediate role is filled by D1035. ATP is bound at residue E1072. A Phosphothreonine modification is found at T1203. Mg(2+) contacts are provided by D1292 and D1296. Residues 1348 to 1365 (INFVFALIYNLVGIPIAA) form a helical membrane-spanning segment. At 1366 to 1376 (GVFLPIGLVLQ) the chain is on the extracellular side. A helical membrane pass occupies residues 1377–1396 (PWMGSAAMAASSVSVVLSSL). The Cytoplasmic segment spans residues 1397–1491 (FLKLYRKPTY…DFREDDDTTL (95 aa)). Phosphoserine occurs at positions 1421, 1423, 1451, 1454, and 1457. Residues 1458 to 1459 (LL) carry the Endocytosis signal motif. 4 positions are modified to phosphoserine: S1460, S1464, S1467, and S1477. A PDZD11-binding region spans residues 1477-1491 (SLLVGDFREDDDTTL). The short motif at 1478 to 1479 (LL) is the Endocytosis signal element.

The protein belongs to the cation transport ATPase (P-type) (TC 3.A.3) family. Type IB subfamily. In terms of assembly, monomer. Interacts with PDZD11. Interacts with ATOX1 and COMMD1. Interacts with TYRP1. Directly interacts with SOD3; this interaction is copper-dependent and is required for SOD3 activity. In terms of tissue distribution, widely expressed. Highly expressed in pituitary endocrine cells. Expressed in melanocytes (at protein level). Expressed in motor neuron (at protein level). Expressed in hippocampal neuron (at protein level). In the kidney, it is detected in the proximal and distal tubules (at protein level). Expressed in aorta (at protein level).

Its subcellular location is the golgi apparatus. It is found in the trans-Golgi network membrane. The protein localises to the cell membrane. The protein resides in the melanosome membrane. It localises to the early endosome membrane. Its subcellular location is the cell projection. It is found in the axon. The protein localises to the dendrite. The protein resides in the postsynaptic density. The enzyme catalyses Cu(+)(in) + ATP + H2O = Cu(+)(out) + ADP + phosphate + H(+). ATP-driven copper (Cu(+)) ion pump that plays an important role in intracellular copper ion homeostasis. Within a catalytic cycle, acquires Cu(+) ion from donor protein on the cytoplasmic side of the membrane and delivers it to acceptor protein on the lumenal side. The transfer of Cu(+) ion across the membrane is coupled to ATP hydrolysis and is associated with a transient phosphorylation that shifts the pump conformation from inward-facing to outward-facing state. Under physiological conditions, at low cytosolic copper concentration, it is localized at the trans-Golgi network (TGN) where it transfers Cu(+) ions to cuproenzymes of the secretory pathway. Upon elevated cytosolic copper concentrations, it relocalizes to the plasma membrane where it is responsible for the export of excess Cu(+) ions. May play a dual role in neuron function and survival by regulating cooper efflux and neuronal transmission at the synapse as well as by supplying Cu(+) ions to enzymes such as PAM, TYR and SOD3. In the melanosomes of pigmented cells, provides copper cofactor to TYR to form an active TYR holoenzyme for melanin biosynthesis. The polypeptide is Copper-transporting ATPase 1 (Mus musculus (Mouse)).